We begin with the raw amino-acid sequence, 84 residues long: Conophysin-R (84 aa).

Disulfide bonds link Cys-6–Cys-46, Cys-9–Cys-20, Cys-14–Cys-36, Cys-21–Cys-26, Cys-53–Cys-71, Cys-65–Cys-83, and Cys-72–Cys-77.

Expressed by the venom duct.

It is found in the secreted. Its function is as follows. Targets vasopressin-oxytocin related receptors. No effect observed when injected into goldfish or into mice. The chain is Conophysin-R from Conus radiatus (Rayed cone).